The following is a 191-amino-acid chain: Large ribosomal subunit protein eL6 (191 aa).

It belongs to the eukaryotic ribosomal protein eL6 family.

The polypeptide is Large ribosomal subunit protein eL6 (RPL6) (Tetrahymena thermophila (strain SB210)).